Here is a 793-residue protein sequence, read N- to C-terminus: Phenylalanine--tRNA ligase beta subunit (793 aa).

The 116-residue stretch at 39–154 (TCSFSSIITA…ENTPLGESAC (116 aa)) folds into the tRNA-binding domain. The region spanning 403 to 481 (PQASTLSFRT…QPWKVENKKA (79 aa)) is the B5 domain. Mg(2+) contacts are provided by Asp457, Asp463, Glu466, and Glu467. The FDX-ACB domain occupies 697 to 793 (PIYPSSFRDI…QINDTKGTID (97 aa)).

It belongs to the phenylalanyl-tRNA synthetase beta subunit family. Type 1 subfamily. As to quaternary structure, tetramer of two alpha and two beta subunits. Mg(2+) is required as a cofactor.

The protein localises to the cytoplasm. The catalysed reaction is tRNA(Phe) + L-phenylalanine + ATP = L-phenylalanyl-tRNA(Phe) + AMP + diphosphate + H(+). In Chlamydia caviae (strain ATCC VR-813 / DSM 19441 / 03DC25 / GPIC) (Chlamydophila caviae), this protein is Phenylalanine--tRNA ligase beta subunit.